The sequence spans 468 residues: ATP synthase subunit beta (468 aa).

155 to 162 (GGAGVGKT) lines the ATP pocket.

This sequence belongs to the ATPase alpha/beta chains family. In terms of assembly, F-type ATPases have 2 components, CF(1) - the catalytic core - and CF(0) - the membrane proton channel. CF(1) has five subunits: alpha(3), beta(3), gamma(1), delta(1), epsilon(1). CF(0) has three main subunits: a(1), b(2) and c(9-12). The alpha and beta chains form an alternating ring which encloses part of the gamma chain. CF(1) is attached to CF(0) by a central stalk formed by the gamma and epsilon chains, while a peripheral stalk is formed by the delta and b chains.

It localises to the cell membrane. The enzyme catalyses ATP + H2O + 4 H(+)(in) = ADP + phosphate + 5 H(+)(out). Produces ATP from ADP in the presence of a proton gradient across the membrane. The catalytic sites are hosted primarily by the beta subunits. The chain is ATP synthase subunit beta from Streptococcus thermophilus (strain ATCC BAA-250 / LMG 18311).